The sequence spans 445 residues: Tubulin alpha-3 chain (445 aa).

Gln11, Glu72, Ser141, Gly145, Thr146, Thr180, Asn207, and Asn229 together coordinate GTP. Glu72 contributes to the Mg(2+) binding site. Residue Glu255 is part of the active site.

The protein belongs to the tubulin family. In terms of assembly, dimer of alpha and beta chains. A typical microtubule is a hollow water-filled tube with an outer diameter of 25 nm and an inner diameter of 15 nM. Alpha-beta heterodimers associate head-to-tail to form protofilaments running lengthwise along the microtubule wall with the beta-tubulin subunit facing the microtubule plus end conferring a structural polarity. Microtubules usually have 13 protofilaments but different protofilament numbers can be found in some organisms and specialized cells. Interacts with NUM1. Requires Mg(2+) as cofactor.

Its subcellular location is the cytoplasm. It localises to the cytoskeleton. It carries out the reaction GTP + H2O = GDP + phosphate + H(+). Tubulin is the major constituent of microtubules, a cylinder consisting of laterally associated linear protofilaments composed of alpha- and beta-tubulin heterodimers. Microtubules grow by the addition of GTP-tubulin dimers to the microtubule end, where a stabilizing cap forms. Below the cap, tubulin dimers are in GDP-bound state, owing to GTPase activity of alpha-tubulin. The sequence is that of Tubulin alpha-3 chain (TUB3) from Saccharomyces cerevisiae (strain ATCC 204508 / S288c) (Baker's yeast).